We begin with the raw amino-acid sequence, 145 residues long: Mannitol-specific phosphotransferase enzyme IIA component (145 aa).

Residues 4-143 (TILSTETIKV…QEVLAFLGEV (140 aa)) enclose the PTS EIIA type-2 domain. His-64 serves as the catalytic Tele-phosphohistidine intermediate. Residue His-64 is modified to Phosphohistidine; by HPr.

The protein resides in the cytoplasm. Functionally, the phosphoenolpyruvate-dependent sugar phosphotransferase system (sugar PTS), a major carbohydrate active transport system, catalyzes the phosphorylation of incoming sugar substrates concomitantly with their translocation across the cell membrane. The enzyme II CmtAB PTS system is involved in D-mannitol transport. The chain is Mannitol-specific phosphotransferase enzyme IIA component (mtlF) from Halalkalibacterium halodurans (strain ATCC BAA-125 / DSM 18197 / FERM 7344 / JCM 9153 / C-125) (Bacillus halodurans).